A 370-amino-acid chain; its full sequence is Quinolinate synthase (370 aa).

Residues histidine 62 and serine 83 each coordinate iminosuccinate. A [4Fe-4S] cluster-binding site is contributed by cysteine 128. Residues 154 to 156 (YAN) and serine 171 contribute to the iminosuccinate site. Cysteine 215 serves as a coordination point for [4Fe-4S] cluster. Residues 241-243 (HPE) and threonine 258 contribute to the iminosuccinate site. Residue cysteine 312 participates in [4Fe-4S] cluster binding.

This sequence belongs to the quinolinate synthase family. Type 1 subfamily. The cofactor is [4Fe-4S] cluster.

It localises to the cytoplasm. It catalyses the reaction iminosuccinate + dihydroxyacetone phosphate = quinolinate + phosphate + 2 H2O + H(+). It functions in the pathway cofactor biosynthesis; NAD(+) biosynthesis; quinolinate from iminoaspartate: step 1/1. Functionally, catalyzes the condensation of iminoaspartate with dihydroxyacetone phosphate to form quinolinate. This Neisseria meningitidis serogroup B (strain ATCC BAA-335 / MC58) protein is Quinolinate synthase.